Reading from the N-terminus, the 1390-residue chain is DNA-directed RNA polymerase subunit beta (1390 aa).

This sequence belongs to the RNA polymerase beta chain family. In terms of assembly, the RNAP catalytic core consists of 2 alpha, 1 beta, 1 beta' and 1 omega subunit. When a sigma factor is associated with the core the holoenzyme is formed, which can initiate transcription.

It catalyses the reaction RNA(n) + a ribonucleoside 5'-triphosphate = RNA(n+1) + diphosphate. In terms of biological role, DNA-dependent RNA polymerase catalyzes the transcription of DNA into RNA using the four ribonucleoside triphosphates as substrates. The polypeptide is DNA-directed RNA polymerase subunit beta (Gluconobacter oxydans (strain 621H) (Gluconobacter suboxydans)).